A 98-amino-acid chain; its full sequence is Acylphosphatase (98 aa).

The 87-residue stretch at 10–96 (ARLLRIRGRV…TDGAGFDCLP (87 aa)) folds into the Acylphosphatase-like domain. Active-site residues include arginine 25 and asparagine 43.

Belongs to the acylphosphatase family.

It catalyses the reaction an acyl phosphate + H2O = a carboxylate + phosphate + H(+). This chain is Acylphosphatase (acyP), found in Azoarcus sp. (strain BH72).